The primary structure comprises 513 residues: Na(+)/H(+) antiporter NhaB (513 aa).

The next 12 helical transmembrane spans lie at 23-43 (LALIIFLIVNPLIFLISPFVA), 52-72 (IFTLAMALKCYPLLPGGLLAI), 97-117 (LLLMFMVAGIYFMKQLLLFIF), 120-140 (LLLSIRSKMLLSLSFCVAAAF), 144-164 (FLDALTVVAVVISVAVGFYGI), 202-222 (LMMHAGVGTALGGVMTMVGEP), 238-258 (FFLRMSPVTVPVLICGLLTCL), 303-323 (AIIGVWLVTALALHLAEVGLI), 348-368 (TESLPFTALLTVFFSVVAVII), 391-411 (LFYIFNGLLSSISDNVFVGTI), 447-467 (ATPNGQAAFLFLLTSALAPLI), and 475-495 (VWMALPYTLVLTLVGLLCVEF).

Belongs to the NhaB Na(+)/H(+) (TC 2.A.34) antiporter family.

The protein resides in the cell inner membrane. The catalysed reaction is 2 Na(+)(in) + 3 H(+)(out) = 2 Na(+)(out) + 3 H(+)(in). In terms of biological role, na(+)/H(+) antiporter that extrudes sodium in exchange for external protons. This chain is Na(+)/H(+) antiporter NhaB, found in Shigella flexneri serotype 5b (strain 8401).